Reading from the N-terminus, the 329-residue chain is Putative glycosyltransferase CsbB (329 aa).

The next 2 helical transmembrane spans lie at 231–251 (CFYTGIFILLLSIIYIIATFV) and 264–284 (FTIISAVLFLGGVQLLSLGII).

Belongs to the glycosyltransferase 2 family. GtrB subfamily.

It localises to the cell membrane. This chain is Putative glycosyltransferase CsbB (csbB), found in Bacillus subtilis (strain 168).